The following is a 105-amino-acid chain: MQVLIGTKLVTEGIDIKQLMMVIMLDNRLNIIELIQGVGRLRDGGLCYLLSRKNSWAARNRKGELPPIKEGCITEQVREFYGLESKKGKKGPACWMLWLQDRPVC.

The Helicase C-terminal domain occupies 2 to 42 (QVLIGTKLVTEGIDIKQLMMVIMLDNRLNIIELIQGVGRLR).

Belongs to the helicase family. Yeast subtelomeric Y' repeat subfamily.

This is an uncharacterized protein from Saccharomyces cerevisiae (strain ATCC 204508 / S288c) (Baker's yeast).